The chain runs to 264 residues: Small ribosomal subunit protein uS2 (264 aa).

The protein belongs to the universal ribosomal protein uS2 family.

The polypeptide is Small ribosomal subunit protein uS2 (Helicobacter pylori (strain P12)).